The primary structure comprises 244 residues: MKIIAVIPARYASTRFPAKLMQDLGGKTVILRTYEAAVSTKLFDDVFVVTDSDLIFDEIVSNGGKAIMSIKEHESGSDRIAEAVANLDVDIVVNVQGDEPFTEAGPLEQVLSVFKNDPDKKIDLASLMREITNEDEINNPNNVKVVVDQSQFALYFSRSVIPYPREKDAGVRYFQHIGIYAFRKQALLDFYSLPMKSLEASEKLEQLRYLEFGKRIKMVETTHVGIGIDTAEDLERARAMLRDI.

The protein belongs to the KdsB family.

It is found in the cytoplasm. It carries out the reaction 3-deoxy-alpha-D-manno-oct-2-ulosonate + CTP = CMP-3-deoxy-beta-D-manno-octulosonate + diphosphate. It participates in nucleotide-sugar biosynthesis; CMP-3-deoxy-D-manno-octulosonate biosynthesis; CMP-3-deoxy-D-manno-octulosonate from 3-deoxy-D-manno-octulosonate and CTP: step 1/1. It functions in the pathway bacterial outer membrane biogenesis; lipopolysaccharide biosynthesis. Activates KDO (a required 8-carbon sugar) for incorporation into bacterial lipopolysaccharide in Gram-negative bacteria. The polypeptide is 3-deoxy-manno-octulosonate cytidylyltransferase (Flavobacterium johnsoniae (strain ATCC 17061 / DSM 2064 / JCM 8514 / BCRC 14874 / CCUG 350202 / NBRC 14942 / NCIMB 11054 / UW101) (Cytophaga johnsonae)).